Here is a 133-residue protein sequence, read N- to C-terminus: Mediator of RNA polymerase II transcription subunit 10 (133 aa).

This sequence belongs to the Mediator complex subunit 10 family. As to quaternary structure, component of the Mediator complex. Interacts with MED4 and MED21.

It is found in the nucleus. In terms of biological role, component of the Mediator complex, a coactivator involved in the regulated transcription of nearly all RNA polymerase II-dependent genes. Mediator functions as a bridge to convey information from gene-specific regulatory proteins to the basal RNA polymerase II transcription machinery. Mediator is recruited to promoters by direct interactions with regulatory proteins and serves as a scaffold for the assembly of a functional preinitiation complex with RNA polymerase II and the general transcription factors. Required for activated transcription of the MtnA, MtnB and MtnD genes. This chain is Mediator of RNA polymerase II transcription subunit 10 (MED10), found in Drosophila melanogaster (Fruit fly).